The sequence spans 443 residues: Tol-Pal system protein TolB (443 aa).

A signal peptide spans methionine 1 to alanine 33.

The protein belongs to the TolB family. The Tol-Pal system is composed of five core proteins: the inner membrane proteins TolA, TolQ and TolR, the periplasmic protein TolB and the outer membrane protein Pal. They form a network linking the inner and outer membranes and the peptidoglycan layer.

The protein resides in the periplasm. Functionally, part of the Tol-Pal system, which plays a role in outer membrane invagination during cell division and is important for maintaining outer membrane integrity. This Brucella anthropi (strain ATCC 49188 / DSM 6882 / CCUG 24695 / JCM 21032 / LMG 3331 / NBRC 15819 / NCTC 12168 / Alc 37) (Ochrobactrum anthropi) protein is Tol-Pal system protein TolB.